A 109-amino-acid polypeptide reads, in one-letter code: Large ribosomal subunit protein eL30 (109 aa).

Belongs to the eukaryotic ribosomal protein eL30 family.

This chain is Large ribosomal subunit protein eL30, found in Methanopyrus kandleri (strain AV19 / DSM 6324 / JCM 9639 / NBRC 100938).